The sequence spans 463 residues: Glutamyl-tRNA(Gln) amidotransferase subunit A, mitochondrial (463 aa).

Active-site charge relay system residues include Lys47 and Ser124. The active-site Acyl-ester intermediate is the Ser148.

Belongs to the amidase family. GatA subfamily. In terms of assembly, subunit of the heterotrimeric GatFAB amidotransferase (AdT) complex, composed of A, B and F subunits.

It localises to the mitochondrion. The enzyme catalyses L-glutamyl-tRNA(Gln) + L-glutamine + ATP + H2O = L-glutaminyl-tRNA(Gln) + L-glutamate + ADP + phosphate + H(+). Allows the formation of correctly charged Gln-tRNA(Gln) through the transamidation of misacylated Glu-tRNA(Gln) in the mitochondria. The reaction takes place in the presence of glutamine and ATP through an activated gamma-phospho-Glu-tRNA(Gln). This is Glutamyl-tRNA(Gln) amidotransferase subunit A, mitochondrial from Eremothecium gossypii (strain ATCC 10895 / CBS 109.51 / FGSC 9923 / NRRL Y-1056) (Yeast).